Reading from the N-terminus, the 155-residue chain is Glycosylation-dependent cell adhesion molecule 1 (155 aa).

An N-terminal signal peptide occupies residues 1–18 (MKFFAVLLLASLAATSLA). An O-linked (GalNAc...) threonine glycan is attached at threonine 34. Residues serine 48, serine 53, serine 57, serine 59, and serine 65 each carry the phosphoserine modification. A disordered region spans residues 74–109 (ARRHQNQNPKLLHPVPQESSFRNTATQSEETKELTP). Over residues 90–101 (QESSFRNTATQS) the composition is skewed to polar residues.

The protein belongs to the PP3/GlyCAM-1 family. In terms of tissue distribution, highly expressed in whey fraction of camel milk.

The chain is Glycosylation-dependent cell adhesion molecule 1 (GLYCAM1) from Camelus dromedarius (Dromedary).